Reading from the N-terminus, the 47-residue chain is PhoP/PhoQ regulator MgrB (47 aa).

The helical transmembrane segment at 6 to 26 threads the bilayer; it reads WAILLAVLVACLLLWMQTLNV.

This sequence belongs to the MgrB family. May form homooligomers. Probably interacts with the periplasmic domain of PhoQ.

Its subcellular location is the cell inner membrane. In terms of biological role, phoP-regulated transcription is redox-sensitive, being activated when the periplasm becomes more reducing. MgrB acts between DsbA/DsbB and PhoP/PhoQ in this pathway. Represses PhoP/PhoQ signaling, possibly by binding to the periplasmic domain of PhoQ, altering its activity and that of downstream effector PhoP. This Cronobacter sakazakii (strain ATCC BAA-894) (Enterobacter sakazakii) protein is PhoP/PhoQ regulator MgrB.